We begin with the raw amino-acid sequence, 95 residues long: Auxin-responsive protein SAUR27 (95 aa).

This sequence belongs to the ARG7 family. In terms of assembly, interacts with PP2C-D1. In terms of tissue distribution, higher expression in thermo-responsive cultivars (e.g. cv. Alst-1, cv. Ang-0 and cv. Com-0) than in low thermo-responsive cultivars (e.g. cv. Dja-1, cv. El-0 and cv. Kon).

The protein localises to the cell membrane. Functionally, functions as a positive effector of cell expansion through modulation of auxin transport. Involved in thermo-responsiveness of plant architecture. Enhances plasma membrane H(+)-ATPase. The polypeptide is Auxin-responsive protein SAUR27 (Arabidopsis thaliana (Mouse-ear cress)).